Reading from the N-terminus, the 609-residue chain is Polyadenylate-binding protein 7 (609 aa).

RRM domains lie at 24-102 (ASLY…WSVR), 112-189 (GNVF…KFMK), 201-278 (TNLY…RAQK), and 304-381 (SNIY…IAQK). Residues 509–586 (EMKKSIQQRQ…AFEVLKSSKT (78 aa)) form the PABC domain.

It belongs to the polyadenylate-binding protein type-1 family. Expressed predominantly in siliques.

The protein resides in the cytoplasm. The protein localises to the nucleus. Its function is as follows. Binds the poly(A) tail of mRNA. Appears to be an important mediator of the multiple roles of the poly(A) tail in mRNA biogenesis, stability and translation. In Arabidopsis thaliana (Mouse-ear cress), this protein is Polyadenylate-binding protein 7 (PAB7).